The following is a 629-amino-acid chain: tRNA uridine 5-carboxymethylaminomethyl modification enzyme MnmG (629 aa).

FAD contacts are provided by residues Gly14–Gly19, Val126, and Ser181. An NAD(+)-binding site is contributed by Gly273–Phe287. Gln370 serves as a coordination point for FAD.

Belongs to the MnmG family. In terms of assembly, homodimer. Heterotetramer of two MnmE and two MnmG subunits. Requires FAD as cofactor.

Its subcellular location is the cytoplasm. In terms of biological role, NAD-binding protein involved in the addition of a carboxymethylaminomethyl (cmnm) group at the wobble position (U34) of certain tRNAs, forming tRNA-cmnm(5)s(2)U34. In Geobacillus thermodenitrificans (strain NG80-2), this protein is tRNA uridine 5-carboxymethylaminomethyl modification enzyme MnmG.